The chain runs to 479 residues: Ammonium transporter Rh type C (479 aa).

The Cytoplasmic segment spans residues Met-1 to Trp-9. Residues Arg-10 to Val-30 traverse the membrane as a helical segment. The Extracellular portion of the chain corresponds to Arg-31–Tyr-60. The N-linked (GlcNAc...) asparagine glycan is linked to Asn-48. A helical membrane pass occupies residues Pro-61–Leu-81. Residues Gln-82–Gly-85 are Cytoplasmic-facing. A helical membrane pass occupies residues Phe-86 to Met-106. The Extracellular portion of the chain corresponds to Gln-107–Glu-123. A helical membrane pass occupies residues Asn-124 to Gly-144. The Cytoplasmic portion of the chain corresponds to Lys-145–Pro-148. The chain crosses the membrane as a helical span at residues Ile-149–Leu-169. The Extracellular portion of the chain corresponds to Leu-170–Asp-177. A helical membrane pass occupies residues Ala-178–Tyr-200. Over Arg-201–Asp-218 the chain is Cytoplasmic. Residues Leu-219 to Ile-239 form a helical membrane-spanning segment. The Extracellular segment spans residues Ser-240–Ala-250. A helical membrane pass occupies residues Ile-251–Leu-271. Over His-272–His-281 the chain is Cytoplasmic. A helical membrane pass occupies residues Ile-282–Met-302. Position 303 (Pro-303) is a topological domain, extracellular. The chain crosses the membrane as a helical span at residues Tyr-304 to Leu-324. The Cytoplasmic segment spans residues Thr-325–Gly-345. Residues Ile-346–Val-366 form a helical membrane-spanning segment. Topologically, residues Tyr-367–Gln-394 are extracellular. The helical transmembrane segment at Ile-395–Ile-415 threads the bilayer. The Cytoplasmic segment spans residues Leu-416–Pro-479.

This sequence belongs to the ammonium transporter (TC 2.A.49) family. Rh subfamily. In terms of assembly, homotrimer. In terms of processing, N-glycosylated.

It is found in the apical cell membrane. The enzyme catalyses NH4(+)(in) = NH4(+)(out). The catalysed reaction is methylamine(out) = methylamine(in). It carries out the reaction CO2(out) = CO2(in). In terms of biological role, ammonium transporter involved in the maintenance of acid-base homeostasis. Transports ammonium and its related derivative methylammonium across the plasma membrane of epithelial cells likely contributing to renal transepithelial ammonia transport and ammonia metabolism. Postulated to primarily mediate an electroneutral bidirectional transport of NH3 ammonia species according to a mechanism that implies interaction of an NH4(+) ion with acidic residues of the pore entry followed by dissociation of NH4(+) into NH3 and H(+). As a result NH3 transits through the central pore and is protonated on the extracellular side reforming NH4(+). May act as a CO2 channel providing for renal acid secretion. The chain is Ammonium transporter Rh type C (RHCG) from Macaca mulatta (Rhesus macaque).